Reading from the N-terminus, the 193-residue chain is Holliday junction branch migration complex subunit RuvA (193 aa).

Residues 1 to 64 (MITSLTGTIL…EDAHLLYGFM (64 aa)) form a domain I region. The domain II stretch occupies residues 65-139 (TVAERDMFRL…DKMGGIAPGP (75 aa)). Residues 139 to 143 (PMGRG) are flexible linker. Residues 144–193 (GAGDPRQEAIAALLTLGYKPAQASQAIAGLADGLGLEDLIRQSLQNLSRH) are domain III.

The protein belongs to the RuvA family. In terms of assembly, homotetramer. Forms an RuvA(8)-RuvB(12)-Holliday junction (HJ) complex. HJ DNA is sandwiched between 2 RuvA tetramers; dsDNA enters through RuvA and exits via RuvB. An RuvB hexamer assembles on each DNA strand where it exits the tetramer. Each RuvB hexamer is contacted by two RuvA subunits (via domain III) on 2 adjacent RuvB subunits; this complex drives branch migration. In the full resolvosome a probable DNA-RuvA(4)-RuvB(12)-RuvC(2) complex forms which resolves the HJ.

The protein resides in the cytoplasm. In terms of biological role, the RuvA-RuvB-RuvC complex processes Holliday junction (HJ) DNA during genetic recombination and DNA repair, while the RuvA-RuvB complex plays an important role in the rescue of blocked DNA replication forks via replication fork reversal (RFR). RuvA specifically binds to HJ cruciform DNA, conferring on it an open structure. The RuvB hexamer acts as an ATP-dependent pump, pulling dsDNA into and through the RuvAB complex. HJ branch migration allows RuvC to scan DNA until it finds its consensus sequence, where it cleaves and resolves the cruciform DNA. The protein is Holliday junction branch migration complex subunit RuvA of Acidithiobacillus ferrooxidans (strain ATCC 53993 / BNL-5-31) (Leptospirillum ferrooxidans (ATCC 53993)).